Consider the following 142-residue polypeptide: Large ribosomal subunit protein uL11 (142 aa).

This sequence belongs to the universal ribosomal protein uL11 family. As to quaternary structure, part of the ribosomal stalk of the 50S ribosomal subunit. Interacts with L10 and the large rRNA to form the base of the stalk. L10 forms an elongated spine to which L12 dimers bind in a sequential fashion forming a multimeric L10(L12)X complex. In terms of processing, one or more lysine residues are methylated.

In terms of biological role, forms part of the ribosomal stalk which helps the ribosome interact with GTP-bound translation factors. The chain is Large ribosomal subunit protein uL11 from Mycoplasma mycoides subsp. mycoides SC (strain CCUG 32753 / NCTC 10114 / PG1).